The chain runs to 1120 residues: TBC1 domain family member 8B (1120 aa).

2 GRAM domains span residues 145-212 (LKFE…EKTS) and 285-353 (EQFN…DKTN). One can recognise a Rab-GAP TBC domain in the interval 487–674 (GIPETLRGEL…NVVDCFFYDG (188 aa)). The region spanning 858 to 893 (NKDSLALWTFRLLDENSDCLINFKEFSSAIDIMYNG) is the EF-hand domain. A disordered region spans residues 1035–1066 (SPTSSAKGFSGTVCGSGGPSEEKTGSHLEKDP). Positions 1054-1066 (SEEKTGSHLEKDP) are enriched in basic and acidic residues.

As to quaternary structure, interacts (via domain Rab-GAP TBC) with RAB11B (in GTP-bound form). Kidney (at protein level).

The protein localises to the cytoplasm. Its subcellular location is the cytosol. In terms of biological role, involved in vesicular recycling, probably as a RAB11B GTPase-activating protein. The polypeptide is TBC1 domain family member 8B (TBC1D8B) (Homo sapiens (Human)).